The sequence spans 94 residues: UPF0298 protein SZO_03600 (94 aa).

This sequence belongs to the UPF0298 family.

It localises to the cytoplasm. This Streptococcus equi subsp. zooepidemicus (strain H70) protein is UPF0298 protein SZO_03600.